The sequence spans 761 residues: Pleckstrin homology domain-containing family M member 3 (761 aa).

The residue at position 132 (Ser-132) is a Phosphoserine. PH domains are found at residues 211 to 308 (NILK…EVVH) and 361 to 456 (NILK…IAAN). The segment at 669 to 722 (SHVYSCSLCSQKGFICEICNNGEILYPFEDISTSRCESCGAVFHSECKEKSVPC) adopts a Phorbol-ester/DAG-type zinc-finger fold.

In terms of assembly, interacts with AKT1.

The protein localises to the cytoplasm. Its subcellular location is the golgi apparatus. The protein resides in the cell membrane. In terms of biological role, involved in skeletal muscle differentiation. May act as a scaffold protein for AKT1 during muscle differentiation. This Homo sapiens (Human) protein is Pleckstrin homology domain-containing family M member 3.